The primary structure comprises 266 residues: Thymidylate synthase (266 aa).

Arg24 serves as a coordination point for dUMP. His54 provides a ligand contact to (6R)-5,10-methylene-5,6,7,8-tetrahydrofolate. 129–130 (RR) is a dUMP binding site. The active-site Nucleophile is Cys149. DUMP-binding positions include 169-172 (RSAD), Asn180, and 210-212 (HIY). Asp172 contributes to the (6R)-5,10-methylene-5,6,7,8-tetrahydrofolate binding site. Position 265 (Ala265) interacts with (6R)-5,10-methylene-5,6,7,8-tetrahydrofolate.

Belongs to the thymidylate synthase family. Bacterial-type ThyA subfamily. Homodimer.

It localises to the cytoplasm. The catalysed reaction is dUMP + (6R)-5,10-methylene-5,6,7,8-tetrahydrofolate = 7,8-dihydrofolate + dTMP. It functions in the pathway pyrimidine metabolism; dTTP biosynthesis. Functionally, catalyzes the reductive methylation of 2'-deoxyuridine-5'-monophosphate (dUMP) to 2'-deoxythymidine-5'-monophosphate (dTMP) while utilizing 5,10-methylenetetrahydrofolate (mTHF) as the methyl donor and reductant in the reaction, yielding dihydrofolate (DHF) as a by-product. This enzymatic reaction provides an intracellular de novo source of dTMP, an essential precursor for DNA biosynthesis. The chain is Thymidylate synthase from Nocardia farcinica (strain IFM 10152).